Consider the following 167-residue polypeptide: Cofilin-2 (167 aa).

The 150-residue stretch at 4–153 (GVTVNDEVIK…KDRCTLADKL (150 aa)) folds into the ADF-H domain. The Nuclear localization signal signature appears at 30–34 (KKRKK).

The protein belongs to the actin-binding proteins ADF family.

The protein resides in the nucleus matrix. It is found in the cytoplasm. Its subcellular location is the cytoskeleton. Controls reversibly actin polymerization and depolymerization in a pH-sensitive manner. It has the ability to bind G- and F-actin in a 1:1 ratio of cofilin to actin. It is the major component of intranuclear and cytoplasmic actin rods. This chain is Cofilin-2 (cfl2), found in Xenopus tropicalis (Western clawed frog).